A 316-amino-acid chain; its full sequence is Pantothenate kinase (316 aa).

ATP is bound at residue 96–103; that stretch reads GSVAVGKS.

Belongs to the prokaryotic pantothenate kinase family.

It is found in the cytoplasm. The enzyme catalyses (R)-pantothenate + ATP = (R)-4'-phosphopantothenate + ADP + H(+). The protein operates within cofactor biosynthesis; coenzyme A biosynthesis; CoA from (R)-pantothenate: step 1/5. This chain is Pantothenate kinase, found in Shouchella clausii (strain KSM-K16) (Alkalihalobacillus clausii).